The primary structure comprises 318 residues: Holliday junction branch migration complex subunit RuvB (318 aa).

The segment at 1-168 is large ATPase domain (RuvB-L); that stretch reads MPENLEIRPS…FGYVAKIVDY (168 aa). I7, R8, G49, K52, T53, T54, R158, Y168, and R205 together coordinate ATP. Position 53 (T53) interacts with Mg(2+). The interval 169-239 is small ATPAse domain (RuvB-S); it reads TLEDMIQIIR…IVNKTFDSIG (71 aa). The interval 242–318 is head domain (RuvB-H); the sequence is NQGLSQINIE…RDYLLELKTN (77 aa). Residues R278, K297, and R302 each contribute to the DNA site.

It belongs to the RuvB family. In terms of assembly, homohexamer. Forms an RuvA(8)-RuvB(12)-Holliday junction (HJ) complex. HJ DNA is sandwiched between 2 RuvA tetramers; dsDNA enters through RuvA and exits via RuvB. An RuvB hexamer assembles on each DNA strand where it exits the tetramer. Each RuvB hexamer is contacted by two RuvA subunits (via domain III) on 2 adjacent RuvB subunits; this complex drives branch migration. In the full resolvosome a probable DNA-RuvA(4)-RuvB(12)-RuvC(2) complex forms which resolves the HJ.

The protein resides in the cytoplasm. It catalyses the reaction ATP + H2O = ADP + phosphate + H(+). The RuvA-RuvB-RuvC complex processes Holliday junction (HJ) DNA during genetic recombination and DNA repair, while the RuvA-RuvB complex plays an important role in the rescue of blocked DNA replication forks via replication fork reversal (RFR). RuvA specifically binds to HJ cruciform DNA, conferring on it an open structure. The RuvB hexamer acts as an ATP-dependent pump, pulling dsDNA into and through the RuvAB complex. RuvB forms 2 homohexamers on either side of HJ DNA bound by 1 or 2 RuvA tetramers; 4 subunits per hexamer contact DNA at a time. Coordinated motions by a converter formed by DNA-disengaged RuvB subunits stimulates ATP hydrolysis and nucleotide exchange. Immobilization of the converter enables RuvB to convert the ATP-contained energy into a lever motion, pulling 2 nucleotides of DNA out of the RuvA tetramer per ATP hydrolyzed, thus driving DNA branch migration. The RuvB motors rotate together with the DNA substrate, which together with the progressing nucleotide cycle form the mechanistic basis for DNA recombination by continuous HJ branch migration. Branch migration allows RuvC to scan DNA until it finds its consensus sequence, where it cleaves and resolves cruciform DNA. In Mesomycoplasma hyopneumoniae (strain 232) (Mycoplasma hyopneumoniae), this protein is Holliday junction branch migration complex subunit RuvB.